A 536-amino-acid polypeptide reads, in one-letter code: Ribulokinase (536 aa).

The protein belongs to the ribulokinase family.

The enzyme catalyses D-ribulose + ATP = D-ribulose 5-phosphate + ADP + H(+). The catalysed reaction is L-ribulose + ATP = L-ribulose 5-phosphate + ADP + H(+). Its pathway is carbohydrate degradation; L-arabinose degradation via L-ribulose; D-xylulose 5-phosphate from L-arabinose (bacterial route): step 2/3. In Staphylococcus epidermidis (strain ATCC 12228 / FDA PCI 1200), this protein is Ribulokinase.